We begin with the raw amino-acid sequence, 104 residues long: Large ribosomal subunit protein uL24 (104 aa).

Belongs to the universal ribosomal protein uL24 family. As to quaternary structure, part of the 50S ribosomal subunit.

In terms of biological role, one of two assembly initiator proteins, it binds directly to the 5'-end of the 23S rRNA, where it nucleates assembly of the 50S subunit. Functionally, one of the proteins that surrounds the polypeptide exit tunnel on the outside of the subunit. In Pseudomonas entomophila (strain L48), this protein is Large ribosomal subunit protein uL24.